The primary structure comprises 709 residues: DNA ligase (709 aa).

Positions 1 to 20 (MTATHRGAQADASAPAGPLP) are disordered. NAD(+) is bound by residues 52–56 (DAEYD), 101–102 (SL), and Glu146. Residue Lys148 is the N6-AMP-lysine intermediate of the active site. NAD(+) contacts are provided by Arg169, Glu205, Lys322, and Lys346. Cys440, Cys443, Cys458, and Cys464 together coordinate Zn(2+). A BRCT domain is found at 623 to 709 (KAPAPLSGKT…AEAGAAPAQE (87 aa)).

It belongs to the NAD-dependent DNA ligase family. LigA subfamily. Mg(2+) is required as a cofactor. Requires Mn(2+) as cofactor.

The enzyme catalyses NAD(+) + (deoxyribonucleotide)n-3'-hydroxyl + 5'-phospho-(deoxyribonucleotide)m = (deoxyribonucleotide)n+m + AMP + beta-nicotinamide D-nucleotide.. Its function is as follows. DNA ligase that catalyzes the formation of phosphodiester linkages between 5'-phosphoryl and 3'-hydroxyl groups in double-stranded DNA using NAD as a coenzyme and as the energy source for the reaction. It is essential for DNA replication and repair of damaged DNA. This chain is DNA ligase, found in Cupriavidus necator (strain ATCC 17699 / DSM 428 / KCTC 22496 / NCIMB 10442 / H16 / Stanier 337) (Ralstonia eutropha).